Consider the following 75-residue polypeptide: Pi-hexatoxin-Hi1a (75 aa).

Disulfide bonds link Cys-3-Cys-18, Cys-10-Cys-23, Cys-17-Cys-33, Cys-40-Cys-55, Cys-47-Cys-60, and Cys-54-Cys-71. Domain repeat units follow at residues 3–33 and 40–71; these read CIRKWLSCVDRKNDCCEGLECYKRRHSFEVC and CLVKWKQCDGRERDCCAGLECWKRSGNKSSVC. A 2 X approximate repeats with cysteine pattern C-C-CC-C-C region spans residues 3–71; it reads CIRKWLSCVD…KRSGNKSSVC (69 aa).

Belongs to the psalmotoxin-1 family. Double-knot toxin subfamily. As to expression, expressed by the venom gland.

The protein resides in the secreted. In terms of biological role, this toxin potently and selectively inhibits ASIC1a (IC(50)=0.4 nM on rASIC1a and IC(50)=0.52 nM on hASIC1a), an isoform of the gene ASIC1. It incompletely inhibits ASIC1a activation in a pH-independent and slowly reversible manner (Tau(off)=14.2 minutes for rASIC1a and 31.8 minutes for hASIC1a). This toxin acts by binding to and stabilizing the closed state of the channel, thereby impeding the transition into a conducting state. This toxin may bind to the acidic pocket of ASIC1a, since mutation of a key residue of this pocket (Arg-350) abolishes the ability of the toxin to inhibit ASIC1a. In addition, it shows antiparasitic activities, since it moderately inhibits the larval development of the major pathogenic nematode of ruminants (H.contortus, IC(50)=22.9 uM). In vivo, this toxin protects the brain from neuronal injury when administered up to 8 hours after stroke onset. In Hadronyche infensa (Fraser island funnel-web spider), this protein is Pi-hexatoxin-Hi1a.